Here is a 453-residue protein sequence, read N- to C-terminus: Asparagine--tRNA ligase (453 aa).

This sequence belongs to the class-II aminoacyl-tRNA synthetase family. Homodimer.

Its subcellular location is the cytoplasm. It carries out the reaction tRNA(Asn) + L-asparagine + ATP = L-asparaginyl-tRNA(Asn) + AMP + diphosphate + H(+). The protein is Asparagine--tRNA ligase of Malacoplasma penetrans (strain HF-2) (Mycoplasma penetrans).